A 443-amino-acid polypeptide reads, in one-letter code: Ribosomal protein uS12 methylthiotransferase RimO (443 aa).

Residues 10–120 enclose the MTTase N-terminal domain; the sequence is PRVGFVSLGC…VMQAVHRHLP (111 aa). C19, C55, C84, C151, C155, and C158 together coordinate [4Fe-4S] cluster. The Radical SAM core domain occupies 137-375; sequence LTPQHYAYLK…DFQEDISTQR (239 aa). A TRAM domain is found at 377 to 443; the sequence is EAKIGREMTV…IHDLYAERVV (67 aa).

Belongs to the methylthiotransferase family. RimO subfamily. [4Fe-4S] cluster serves as cofactor.

The protein localises to the cytoplasm. The enzyme catalyses L-aspartate(89)-[ribosomal protein uS12]-hydrogen + (sulfur carrier)-SH + AH2 + 2 S-adenosyl-L-methionine = 3-methylsulfanyl-L-aspartate(89)-[ribosomal protein uS12]-hydrogen + (sulfur carrier)-H + 5'-deoxyadenosine + L-methionine + A + S-adenosyl-L-homocysteine + 2 H(+). Functionally, catalyzes the methylthiolation of an aspartic acid residue of ribosomal protein uS12. In Azoarcus sp. (strain BH72), this protein is Ribosomal protein uS12 methylthiotransferase RimO.